The chain runs to 149 residues: MKTFTPKPADLTHDWYVIDATDVVLGRLATQAATLLRGKNKPTYAPHADSGNHVIILNADKIALTGNKLGKELYMHSGRPGGLRRDSYAQLLKTNPERIIKSAIKGMLPKNRLAKVQLDRLHIVRGAEHPYAGMKPQVFEIAQVSQQAK.

The protein belongs to the universal ribosomal protein uL13 family. In terms of assembly, part of the 50S ribosomal subunit.

This protein is one of the early assembly proteins of the 50S ribosomal subunit, although it is not seen to bind rRNA by itself. It is important during the early stages of 50S assembly. The sequence is that of Large ribosomal subunit protein uL13 from Bifidobacterium adolescentis (strain ATCC 15703 / DSM 20083 / NCTC 11814 / E194a).